Here is a 234-residue protein sequence, read N- to C-terminus: Adenosine 5'-phosphosulfate reductase (234 aa).

[4Fe-4S] cluster contacts are provided by Cys120, Cys121, Cys203, and Cys206. The active-site Nucleophile; cysteine thiosulfonate intermediate is the Cys229.

This sequence belongs to the PAPS reductase family. CysH subfamily. The cofactor is [4Fe-4S] cluster.

The protein resides in the cytoplasm. The enzyme catalyses [thioredoxin]-disulfide + sulfite + AMP + 2 H(+) = adenosine 5'-phosphosulfate + [thioredoxin]-dithiol. The protein operates within sulfur metabolism; hydrogen sulfide biosynthesis; sulfite from sulfate. Its function is as follows. Catalyzes the formation of sulfite from adenosine 5'-phosphosulfate (APS) using thioredoxin as an electron donor. This chain is Adenosine 5'-phosphosulfate reductase, found in Bacillus cereus (strain B4264).